We begin with the raw amino-acid sequence, 1215 residues long: DNA-directed RNA polymerase subunit beta' (1215 aa).

Zn(2+) is bound by residues cysteine 60, cysteine 62, cysteine 75, and cysteine 78. The Mg(2+) site is built by aspartate 450, aspartate 452, and aspartate 454. Zn(2+) is bound by residues cysteine 818, cysteine 892, cysteine 899, and cysteine 902.

The protein belongs to the RNA polymerase beta' chain family. The RNAP catalytic core consists of 2 alpha, 1 beta, 1 beta' and 1 omega subunit. When a sigma factor is associated with the core the holoenzyme is formed, which can initiate transcription. Mg(2+) is required as a cofactor. Requires Zn(2+) as cofactor.

It catalyses the reaction RNA(n) + a ribonucleoside 5'-triphosphate = RNA(n+1) + diphosphate. In terms of biological role, DNA-dependent RNA polymerase catalyzes the transcription of DNA into RNA using the four ribonucleoside triphosphates as substrates. In Streptococcus suis (strain 98HAH33), this protein is DNA-directed RNA polymerase subunit beta'.